Consider the following 241-residue polypeptide: Uridylate kinase (241 aa).

An ATP-binding site is contributed by 12-15; that stretch reads KVSG. The segment at 20–25 is involved in allosteric activation by GTP; that stretch reads GEKGTG. UMP is bound at residue Gly-54. The ATP site is built by Gly-55 and Arg-59. Residues Asp-74 and 135–142 contribute to the UMP site; that span reads TGNPYFST. ATP contacts are provided by Asn-163, Tyr-169, and Asp-172.

This sequence belongs to the UMP kinase family. In terms of assembly, homohexamer.

The protein resides in the cytoplasm. The catalysed reaction is UMP + ATP = UDP + ADP. The protein operates within pyrimidine metabolism; CTP biosynthesis via de novo pathway; UDP from UMP (UMPK route): step 1/1. With respect to regulation, allosterically activated by GTP. Inhibited by UTP. In terms of biological role, catalyzes the reversible phosphorylation of UMP to UDP. This chain is Uridylate kinase, found in Lactobacillus johnsonii (strain CNCM I-12250 / La1 / NCC 533).